A 409-amino-acid polypeptide reads, in one-letter code: 8-amino-7-oxononanoate synthase (409 aa).

R20 serves as a coordination point for substrate. 116–117 (GY) serves as a coordination point for pyridoxal 5'-phosphate. H141 lines the substrate pocket. Residues S187, H215, and T243 each contribute to the pyridoxal 5'-phosphate site. Residue K246 is modified to N6-(pyridoxal phosphate)lysine. T369 is a substrate binding site.

It belongs to the class-II pyridoxal-phosphate-dependent aminotransferase family. BioF subfamily. Homodimer. Pyridoxal 5'-phosphate serves as cofactor.

The catalysed reaction is 6-carboxyhexanoyl-[ACP] + L-alanine + H(+) = (8S)-8-amino-7-oxononanoate + holo-[ACP] + CO2. It functions in the pathway cofactor biosynthesis; biotin biosynthesis. Its function is as follows. Catalyzes the decarboxylative condensation of pimeloyl-[acyl-carrier protein] and L-alanine to produce 8-amino-7-oxononanoate (AON), [acyl-carrier protein], and carbon dioxide. The polypeptide is 8-amino-7-oxononanoate synthase (Polaromonas naphthalenivorans (strain CJ2)).